Reading from the N-terminus, the 464-residue chain is Soluble pyridine nucleotide transhydrogenase (464 aa).

35–44 (DSRRVVGGNC) contributes to the FAD binding site.

Belongs to the class-I pyridine nucleotide-disulfide oxidoreductase family. FAD serves as cofactor.

It localises to the cytoplasm. The enzyme catalyses NAD(+) + NADPH = NADH + NADP(+). Conversion of NADPH, generated by peripheral catabolic pathways, to NADH, which can enter the respiratory chain for energy generation. This chain is Soluble pyridine nucleotide transhydrogenase, found in Pseudomonas paraeruginosa (strain DSM 24068 / PA7) (Pseudomonas aeruginosa (strain PA7)).